The sequence spans 182 residues: ATP-dependent protease subunit HslV (182 aa).

Residue Thr-2 is part of the active site. Gly-157, Cys-160, and Thr-163 together coordinate Na(+).

The protein belongs to the peptidase T1B family. HslV subfamily. As to quaternary structure, a double ring-shaped homohexamer of HslV is capped on each side by a ring-shaped HslU homohexamer. The assembly of the HslU/HslV complex is dependent on binding of ATP.

The protein localises to the cytoplasm. It catalyses the reaction ATP-dependent cleavage of peptide bonds with broad specificity.. With respect to regulation, allosterically activated by HslU binding. In terms of biological role, protease subunit of a proteasome-like degradation complex believed to be a general protein degrading machinery. This is ATP-dependent protease subunit HslV from Vibrio atlanticus (strain LGP32) (Vibrio splendidus (strain Mel32)).